Reading from the N-terminus, the 390-residue chain is Putative 8-amino-7-oxononanoate synthase (390 aa).

Arginine 19 provides a ligand contact to substrate. Position 105-106 (105-106) interacts with pyridoxal 5'-phosphate; that stretch reads GY. A substrate-binding site is contributed by histidine 130. Pyridoxal 5'-phosphate contacts are provided by residues serine 177, 202–205, and 234–237; these read DEAH and TFSK. Lysine 237 carries the post-translational modification N6-(pyridoxal phosphate)lysine. Residue threonine 351 coordinates substrate.

This sequence belongs to the class-II pyridoxal-phosphate-dependent aminotransferase family. BioF subfamily. Homodimer. It depends on pyridoxal 5'-phosphate as a cofactor.

The catalysed reaction is 6-carboxyhexanoyl-[ACP] + L-alanine + H(+) = (8S)-8-amino-7-oxononanoate + holo-[ACP] + CO2. It functions in the pathway cofactor biosynthesis; biotin biosynthesis. Its function is as follows. Catalyzes the decarboxylative condensation of pimeloyl-[acyl-carrier protein] and L-alanine to produce 8-amino-7-oxononanoate (AON), [acyl-carrier protein], and carbon dioxide. This Geobacillus kaustophilus (strain HTA426) protein is Putative 8-amino-7-oxononanoate synthase (bioF).